The sequence spans 347 residues: DNA primase small subunit PriS (347 aa).

Active-site residues include aspartate 95 and aspartate 97. Positions 106, 108, 114, and 117 each coordinate Zn(2+). Positions 106-117 match the Zinc knuckle motif motif; sequence CNHEPGTVCPIC. Aspartate 280 is a catalytic residue.

It belongs to the eukaryotic-type primase small subunit family. As to quaternary structure, heterodimer of a small subunit (PriS) and a large subunit (PriL). Both participate in formation of the active center, but the ATP-binding site is exclusively located on the small subunit. It depends on Mg(2+) as a cofactor. The cofactor is Mn(2+).

Its function is as follows. Catalytic subunit of DNA primase, an RNA polymerase that catalyzes the synthesis of short RNA molecules used as primers for DNA polymerase during DNA replication. The small subunit contains the primase catalytic core and has DNA synthesis activity on its own. Binding to the large subunit stabilizes and modulates the activity, increasing the rate of DNA synthesis while decreasing the length of the DNA fragments, and conferring RNA synthesis capability. The DNA polymerase activity may enable DNA primase to also catalyze primer extension after primer synthesis. May also play a role in DNA repair. This is DNA primase small subunit PriS from Pyrococcus furiosus (strain ATCC 43587 / DSM 3638 / JCM 8422 / Vc1).